A 444-amino-acid polypeptide reads, in one-letter code: Na(+)/H(+) antiporter NhaA (444 aa).

11 consecutive transmembrane segments (helical) span residues 27 to 47, 72 to 92, 108 to 128, 136 to 156, 167 to 187, 190 to 210, 212 to 232, 312 to 332, 349 to 369, 385 to 405, and 419 to 439; these read TTGLMLMLMTVVALLLANSPL, IHHWINDGLMAIFFFIIGLEI, MLPILAAIGGMALPALIYYAI, AGWGIPMATDIAFAISALVLL, FLVALAIVDDLGAVVVIALFY, EINMLPLLFAFISFLVLVSFN, FGIHAILPYFVVGFIMWLFML, HLPVSLVVIPLFALANAGVSI, VMAGLVFGKVFGIAGISYLAI, VFGVAFLGGIGFTMSIFIAEL, and IGILAASLFAGIFGFIWLRFI.

The protein belongs to the NhaA Na(+)/H(+) (TC 2.A.33) antiporter family.

It is found in the cell inner membrane. The enzyme catalyses Na(+)(in) + 2 H(+)(out) = Na(+)(out) + 2 H(+)(in). Functionally, na(+)/H(+) antiporter that extrudes sodium in exchange for external protons. The polypeptide is Na(+)/H(+) antiporter NhaA (Sulfurimonas denitrificans (strain ATCC 33889 / DSM 1251) (Thiomicrospira denitrificans (strain ATCC 33889 / DSM 1251))).